Consider the following 867-residue polypeptide: Respiratory burst oxidase homolog protein B (867 aa).

The span at 1–13 shows a compositional bias: basic and acidic residues; that stretch reads MEIENTRDSDSMR. The segment at 1–20 is disordered; sequence MEIENTRDSDSMRGSRVGFS. Residues 1-322 lie on the Cytoplasmic side of the membrane; the sequence is MEIENTRDSD…DYFIEDNWKR (322 aa). A phosphoserine; by CPK mark is found at S82 and S97. 2 EF-hand-like regions span residues 141–149 and 175–186; these read AVNGMLTKS and RCITSPAVTKDE. EF-hand domains follow at residues 198–233 and 242–277; these read SFDARLQTFFDMVDKDADGRITQEEVKEIISLSASA and NSDEYAALIMEELDPGNVGYIELYNLETLLLQAPSH. D211, D213, D215, R217, and E222 together coordinate Ca(2+). The helical transmembrane segment at 323–343 threads the bilayer; the sequence is IWVMALWLSICAGLFTWKFIQ. At 344–358 the chain is on the extracellular side; that stretch reads YKRRAVFDVMGYCVS. A helical membrane pass occupies residues 359–379; that stretch reads VAKGGAETTKFNMALVLLPVC. Residues 361–519 enclose the Ferric oxidoreductase domain; that stretch reads KGGAETTKFN…LFVIVYVLFI (159 aa). Over 380–407 the chain is Cytoplasmic; that stretch reads RNTITWLRSRTKLGKIIPFDDNINFHKV. The chain crosses the membrane as a helical span at residues 408 to 428; the sequence is IAFGIAVGVGLHAISHLTCDF. Topologically, residues 429–463 are extracellular; that stretch reads PRLLHATDEEYEPMKPFFGDERPNNYWWFVKGTEG. A helical membrane pass occupies residues 464 to 484; sequence WTGVVMVVLMIIAYVLAQPWF. At 485–506 the chain is on the cytoplasmic side; it reads RRNRLNLPSTIKKLTGFNAFWY. Residues 507–527 form a helical membrane-spanning segment; that stretch reads SHHLFVIVYVLFIIHGYFLYL. Residues 528–686 lie on the Extracellular side of the membrane; that stretch reads SKKWYKKTTW…APAQDYKKYD (159 aa). The FAD-binding FR-type domain maps to 558-681; it reads SGYKAVKILK…DGPYGAPAQD (124 aa). The chain crosses the membrane as a helical span at residues 687–707; the sequence is VVLLVGLGIGATPLISIVKDV. Residues 708 to 867 are Cytoplasmic-facing; that stretch reads LNNIKQQKNI…TKFEFHKENF (160 aa).

Belongs to the RBOH (TC 5.B.1.3) family. Monomer and homodimer. Phosphorylation at Ser-82 and Ser-97 is required for full activity of RBOHB. Not phosphorylated at Ser-89. Phosphorylation at Ser-82 is induced by fungal elicitor treatment.

The protein resides in the cell membrane. Its activity is regulated as follows. Inhibited by diphenylene iodinium (DPI). Calcium-dependent NADPH oxidase that generates superoxide. Involved in the massive phase II oxidative burst induced by pathogen infection. The chain is Respiratory burst oxidase homolog protein B (RBOHB) from Solanum tuberosum (Potato).